A 101-amino-acid polypeptide reads, in one-letter code: Small ribosomal subunit protein uS14 (101 aa).

The protein belongs to the universal ribosomal protein uS14 family. In terms of assembly, part of the 30S ribosomal subunit. Contacts proteins S3 and S10.

Binds 16S rRNA, required for the assembly of 30S particles and may also be responsible for determining the conformation of the 16S rRNA at the A site. The polypeptide is Small ribosomal subunit protein uS14 (Delftia acidovorans (strain DSM 14801 / SPH-1)).